The chain runs to 55 residues: Large ribosomal subunit protein bL33 (55 aa).

Belongs to the bacterial ribosomal protein bL33 family.

This chain is Large ribosomal subunit protein bL33, found in Hamiltonella defensa subsp. Acyrthosiphon pisum (strain 5AT).